We begin with the raw amino-acid sequence, 505 residues long: Histidine ammonia-lyase (505 aa).

The segment at residues Ala141–Gly143 is a cross-link (5-imidazolinone (Ala-Gly)). Position 142 is a 2,3-didehydroalanine (Ser) (Ser142).

This sequence belongs to the PAL/histidase family. In terms of processing, contains an active site 4-methylidene-imidazol-5-one (MIO), which is formed autocatalytically by cyclization and dehydration of residues Ala-Ser-Gly.

The protein resides in the cytoplasm. It catalyses the reaction L-histidine = trans-urocanate + NH4(+). It functions in the pathway amino-acid degradation; L-histidine degradation into L-glutamate; N-formimidoyl-L-glutamate from L-histidine: step 1/3. The chain is Histidine ammonia-lyase from Bacillus cereus (strain ATCC 10987 / NRS 248).